The following is a 914-amino-acid chain: Valine--tRNA ligase (914 aa).

The short motif at 47 to 57 (PYPTGELHMGH) is the 'HIGH' region element. The 'KMSKS' region signature appears at 552-556 (KMSKS). Position 555 (Lys555) interacts with ATP.

This sequence belongs to the class-I aminoacyl-tRNA synthetase family. ValS type 2 subfamily.

Its subcellular location is the cytoplasm. It carries out the reaction tRNA(Val) + L-valine + ATP = L-valyl-tRNA(Val) + AMP + diphosphate. Functionally, catalyzes the attachment of valine to tRNA(Val). As ValRS can inadvertently accommodate and process structurally similar amino acids such as threonine, to avoid such errors, it has a 'posttransfer' editing activity that hydrolyzes mischarged Thr-tRNA(Val) in a tRNA-dependent manner. In Methanopyrus kandleri (strain AV19 / DSM 6324 / JCM 9639 / NBRC 100938), this protein is Valine--tRNA ligase.